The primary structure comprises 185 residues: Translation initiation factor IF-3 (185 aa).

This sequence belongs to the IF-3 family. Monomer.

Its subcellular location is the cytoplasm. IF-3 binds to the 30S ribosomal subunit and shifts the equilibrium between 70S ribosomes and their 50S and 30S subunits in favor of the free subunits, thus enhancing the availability of 30S subunits on which protein synthesis initiation begins. The polypeptide is Translation initiation factor IF-3 (Rickettsia felis (strain ATCC VR-1525 / URRWXCal2) (Rickettsia azadi)).